The primary structure comprises 351 residues: Uroporphyrinogen decarboxylase (351 aa).

Substrate is bound by residues 26 to 30, Asp75, Tyr151, Ser206, and His321; that span reads RQAGR.

It belongs to the uroporphyrinogen decarboxylase family. Homodimer.

The protein localises to the cytoplasm. The catalysed reaction is uroporphyrinogen III + 4 H(+) = coproporphyrinogen III + 4 CO2. It participates in porphyrin-containing compound metabolism; protoporphyrin-IX biosynthesis; coproporphyrinogen-III from 5-aminolevulinate: step 4/4. Catalyzes the decarboxylation of four acetate groups of uroporphyrinogen-III to yield coproporphyrinogen-III. The protein is Uroporphyrinogen decarboxylase of Koribacter versatilis (strain Ellin345).